The following is an 805-amino-acid chain: Acetyl-CoA decarbonylase/synthase complex subunit alpha 3 (805 aa).

The [4Fe-4S] cluster site is built by C72, C75, C76, C78, C83, and C93. A CO-binding site is contributed by H116. Positions 249, 277, and 322 each coordinate [Ni-4Fe-4S] cluster. 4Fe-4S ferredoxin-type domains lie at 407-435 (EEFKVYIDKCVKCGECMLACPEELDIPEA) and 445-474 (EYLEALHDVCIGCRRCEQVCKKEIPILNVL). Positions 416, 419, 422, 426, 454, 457, 460, and 464 each coordinate [4Fe-4S] cluster. [Ni-4Fe-4S] cluster is bound by residues C522, C551, and C586.

It belongs to the Ni-containing carbon monoxide dehydrogenase family. Heterotetramer of two alpha and two epsilon subunits. The ACDS complex is made up of alpha, epsilon, beta, gamma and delta subunits with a probable stoichiometry of (alpha(2)epsilon(2))(4)-beta(8)-(gamma(1)delta(1))(8). Requires [4Fe-4S] cluster as cofactor. It depends on [Ni-4Fe-4S] cluster as a cofactor.

The catalysed reaction is CO + 2 oxidized [2Fe-2S]-[ferredoxin] + H2O = 2 reduced [2Fe-2S]-[ferredoxin] + CO2 + 2 H(+). It participates in one-carbon metabolism; methanogenesis from acetate. Its function is as follows. Part of the ACDS complex that catalyzes the reversible cleavage of acetyl-CoA, allowing growth on acetate as sole source of carbon and energy. The alpha-epsilon subcomponent functions as a carbon monoxide dehydrogenase. This chain is Acetyl-CoA decarbonylase/synthase complex subunit alpha 3, found in Methanosarcina acetivorans (strain ATCC 35395 / DSM 2834 / JCM 12185 / C2A).